Here is a 573-residue protein sequence, read N- to C-terminus: Proline--tRNA ligase (573 aa).

Belongs to the class-II aminoacyl-tRNA synthetase family. ProS type 1 subfamily. Homodimer.

It is found in the cytoplasm. It carries out the reaction tRNA(Pro) + L-proline + ATP = L-prolyl-tRNA(Pro) + AMP + diphosphate. Its function is as follows. Catalyzes the attachment of proline to tRNA(Pro) in a two-step reaction: proline is first activated by ATP to form Pro-AMP and then transferred to the acceptor end of tRNA(Pro). As ProRS can inadvertently accommodate and process non-cognate amino acids such as alanine and cysteine, to avoid such errors it has two additional distinct editing activities against alanine. One activity is designated as 'pretransfer' editing and involves the tRNA(Pro)-independent hydrolysis of activated Ala-AMP. The other activity is designated 'posttransfer' editing and involves deacylation of mischarged Ala-tRNA(Pro). The misacylated Cys-tRNA(Pro) is not edited by ProRS. In Limosilactobacillus fermentum (strain NBRC 3956 / LMG 18251) (Lactobacillus fermentum), this protein is Proline--tRNA ligase.